We begin with the raw amino-acid sequence, 399 residues long: Probable aspartate/prephenate aminotransferase (399 aa).

L-aspartate-binding residues include Gly-39, Trp-125, and Asn-175. At Lys-239 the chain carries N6-(pyridoxal phosphate)lysine. Arg-375 lines the L-aspartate pocket.

The protein belongs to the class-I pyridoxal-phosphate-dependent aminotransferase family. In terms of assembly, homodimer. Pyridoxal 5'-phosphate serves as cofactor.

The protein resides in the cytoplasm. The catalysed reaction is L-aspartate + 2-oxoglutarate = oxaloacetate + L-glutamate. It carries out the reaction L-arogenate + 2-oxoglutarate = prephenate + L-glutamate. Functionally, catalyzes the reversible conversion of aspartate and 2-oxoglutarate to glutamate and oxaloacetate. Can also transaminate prephenate in the presence of glutamate. The protein is Probable aspartate/prephenate aminotransferase (aatA) of Rickettsia typhi (strain ATCC VR-144 / Wilmington).